The primary structure comprises 89 residues: UPF0297 protein lp_2275 (89 aa).

Belongs to the UPF0297 family.

This Lactiplantibacillus plantarum (strain ATCC BAA-793 / NCIMB 8826 / WCFS1) (Lactobacillus plantarum) protein is UPF0297 protein lp_2275.